The primary structure comprises 119 residues: Autophagy-related protein 8A (119 aa).

The Phosphatidylethanolamine amidated glycine moiety is linked to residue glycine 117. A propeptide spans 118 to 119 (SA) (removed in mature form).

This sequence belongs to the ATG8 family. Interacts with ATG4. The C-terminal 2 residues are removed by ATG4 to expose Gly-117 at the C-terminus. The C-terminal Gly is then amidated with phosphatidylethanolamine by an activating system similar to that for ubiquitin. As to expression, constitutively expressed.

Its subcellular location is the cytoplasmic vesicle. It localises to the autophagosome membrane. The protein localises to the vacuole membrane. It is found in the cytoplasm. The protein resides in the cytoskeleton. In terms of biological role, ubiquitin-like modifier involved in cytoplasm to vacuole transport (Cvt) vesicles and autophagosomes formation. May mediate the delivery of the vesicles and autophagosomes to the vacuole via the microtubule cytoskeleton. Its function is as follows. Ubiquitin-like modifier involved in autophagosomes formation. May mediate the delivery of the autophagosomes to the vacuole via the microtubule cytoskeleton. In Oryza sativa subsp. indica (Rice), this protein is Autophagy-related protein 8A (ATG8A).